We begin with the raw amino-acid sequence, 273 residues long: Stress response protein YsnF (273 aa).

Residues 241–264 (ENEHISETVKKEEPRLNKEGKVDG) show a composition bias toward basic and acidic residues. The tract at residues 241-273 (ENEHISETVKKEEPRLNKEGKVDGLDDDPLNNK) is disordered.

The protein is Stress response protein YsnF (ysnF) of Bacillus subtilis (strain 168).